A 193-amino-acid polypeptide reads, in one-letter code: Sarcoplasmic calcium-binding protein, alpha chain (193 aa).

IgE-binding epitope regions lie at residues 10–36 (KYVVRYMYDIDNNGFLDKNDFECLAVR) and 49–72 (DAYANNQKIMRNLWNEIAELADFN). EF-hand domains are found at residues 16 to 40 (MYDIDNNGFLDKNDFECLAVRNTLI), 57 to 92 (IMRNLWNEIAELADFNKDGEVTVDEFKQAVQKHCQG), and 101 to 136 (AFKVFIANQFKAIDVNGDGKVGLDEYRLDCITRSAF). Ca(2+) contacts are provided by Asp18, Asp20, Asn22, Asp29, Asp70, Asn72, Asp74, Glu76, Glu81, Asp114, Asn116, Asp118, Lys120, and Glu125. Positions 130–147 (CITRSAFAEVKEIDDAYN) are igE-binding epitope.

In terms of assembly, SCPs from crayfish, lobster, and shrimp are polymorphic dimers; three isotypes (alpha-alpha, alpha-beta, and beta-beta) have been identified. In terms of tissue distribution, expressed in tail muscle (at protein level).

Like parvalbumins, SCPs seem to be more abundant in fast contracting muscles, but no functional relationship can be established from this distribution. In Penaeus vannamei (Whiteleg shrimp), this protein is Sarcoplasmic calcium-binding protein, alpha chain.